The chain runs to 431 residues: Glutamate--tRNA ligase 1 (431 aa).

The 'HIGH' region motif lies at 6 to 16 (PSPTGDMHIGN). Positions 235-239 (KMSKR) match the 'KMSKS' region motif. Lys-238 lines the ATP pocket.

The protein belongs to the class-I aminoacyl-tRNA synthetase family. Glutamate--tRNA ligase type 1 subfamily. As to quaternary structure, monomer.

It localises to the cytoplasm. It catalyses the reaction tRNA(Glu) + L-glutamate + ATP = L-glutamyl-tRNA(Glu) + AMP + diphosphate. In terms of biological role, catalyzes the attachment of glutamate to tRNA(Glu) in a two-step reaction: glutamate is first activated by ATP to form Glu-AMP and then transferred to the acceptor end of tRNA(Glu). In Campylobacter concisus (strain 13826), this protein is Glutamate--tRNA ligase 1.